We begin with the raw amino-acid sequence, 910 residues long: Protein translocase subunit SecA (910 aa).

Residues Q86, 104–108, and D499 contribute to the ATP site; that span reads GEGKT. Positions 894, 896, 905, and 906 each coordinate Zn(2+).

It belongs to the SecA family. Monomer and homodimer. Part of the essential Sec protein translocation apparatus which comprises SecA, SecYEG and auxiliary proteins SecDF-YajC and YidC. The cofactor is Zn(2+).

Its subcellular location is the cell inner membrane. It is found in the cytoplasm. It catalyses the reaction ATP + H2O + cellular proteinSide 1 = ADP + phosphate + cellular proteinSide 2.. Functionally, part of the Sec protein translocase complex. Interacts with the SecYEG preprotein conducting channel. Has a central role in coupling the hydrolysis of ATP to the transfer of proteins into and across the cell membrane, serving both as a receptor for the preprotein-SecB complex and as an ATP-driven molecular motor driving the stepwise translocation of polypeptide chains across the membrane. This chain is Protein translocase subunit SecA, found in Rickettsia bellii (strain OSU 85-389).